The following is a 345-amino-acid chain: Anthranilate phosphoribosyltransferase (345 aa).

5-phospho-alpha-D-ribose 1-diphosphate-binding positions include Gly-79, 82 to 83 (GD), Thr-87, 89 to 92 (NVST), 106 to 114 (KHGNRAVSG), and Ser-118. Gly-79 is an anthranilate binding site. Ser-91 serves as a coordination point for Mg(2+). Residue Asn-109 participates in anthranilate binding. Arg-164 contacts anthranilate. The Mg(2+) site is built by Asp-223 and Glu-224.

Belongs to the anthranilate phosphoribosyltransferase family. As to quaternary structure, homodimer. Requires Mg(2+) as cofactor.

It carries out the reaction N-(5-phospho-beta-D-ribosyl)anthranilate + diphosphate = 5-phospho-alpha-D-ribose 1-diphosphate + anthranilate. Its pathway is amino-acid biosynthesis; L-tryptophan biosynthesis; L-tryptophan from chorismate: step 2/5. Its function is as follows. Catalyzes the transfer of the phosphoribosyl group of 5-phosphorylribose-1-pyrophosphate (PRPP) to anthranilate to yield N-(5'-phosphoribosyl)-anthranilate (PRA). The sequence is that of Anthranilate phosphoribosyltransferase from Saccharolobus islandicus (strain L.S.2.15 / Lassen #1) (Sulfolobus islandicus).